Consider the following 699-residue polypeptide: Endogenous retrovirus group K member 8 Env polyprotein (699 aa).

The tract at residues 1–47 is disordered; it reads MNPSEMQRKAPPRRRRHRNRAPLTHKMNKMVTSEEQMKLPSTKKAEP. The N-terminal stretch at 1 to 89 is a signal peptide; it reads MNPSEMQRKA…ALMIVSMVVS (89 aa). A compositionally biased stretch (basic residues) spans 10–20; that stretch reads APPRRRRHRNR. At 90-632 the chain is on the extracellular side; sequence LPMPAGAAVA…NLNPVTWVKT (543 aa). N-linked (GlcNAc...) asparagine glycans are attached at residues N100, N128, N153, N274, N355, N372, and N461. Residues 466-486 form a fusion peptide region; it reads FIFTLIAVIMGLIAVTATAAV. N507, N554, N566, and N585 each carry an N-linked (GlcNAc...) asparagine glycan. The chain crosses the membrane as a helical span at residues 633-653; that stretch reads IGSTTIINLILILVCLFCLLL. The Cytoplasmic segment spans residues 654–699; sequence VCRCTQQLRRDSDHRERAMMTMAVLSKRKGGNVGKSKRDQIVTVSV.

It belongs to the beta type-B retroviral envelope protein family. HERV class-II K(HML-2) env subfamily. The surface (SU) and transmembrane (TM) proteins form a heterodimer. SU and TM are attached by noncovalent interactions or by a labile interchain disulfide bond. Post-translationally, specific enzymatic cleavages in vivo yield the mature SU and TM proteins.

The protein resides in the cell membrane. It localises to the virion. Its function is as follows. Retroviral envelope proteins mediate receptor recognition and membrane fusion during early infection. Endogenous envelope proteins may have kept, lost or modified their original function during evolution. This endogenous envelope protein has lost its original fusogenic properties. SU mediates receptor recognition. In terms of biological role, TM anchors the envelope heterodimer to the viral membrane through one transmembrane domain. The other hydrophobic domain, called fusion peptide, mediates fusion of the viral membrane with the target cell membrane. The chain is Endogenous retrovirus group K member 8 Env polyprotein (ERVK-8) from Homo sapiens (Human).